A 68-amino-acid chain; its full sequence is Venom-like beta-defensin (68 aa).

An N-terminal signal peptide occupies residues 1–24 (MRLLILFLAVVTLLSLAGPGSAEV). Cystine bridges form between Cys33–Cys60, Cys40–Cys54, and Cys47–Cys61.

As to expression, highly expressed in intestine, liver and spleen and expressed at lower levels in brain, kidney, lung, testis and venom gland.

The protein localises to the secreted. In terms of biological role, potent antimicrobial peptide that displays activity against S.aureus and P.aeruginosa. Does not inhibit growth of E.coli. The polypeptide is Venom-like beta-defensin (Ornithorhynchus anatinus (Duckbill platypus)).